A 125-amino-acid polypeptide reads, in one-letter code: MARIAGVNIPTNKRVTIGLRYIYGIGETKAEEICRRLEIPAERRVNELSDDEILKIRELIDSEYRVEGDLRREVAMNIKRLMDLGCYRGLRHRRGLPVRGQRTHTNARTRKGKAVAIAGKKKATR.

Belongs to the universal ribosomal protein uS13 family. In terms of assembly, part of the 30S ribosomal subunit. Forms a loose heterodimer with protein S19. Forms two bridges to the 50S subunit in the 70S ribosome.

Functionally, located at the top of the head of the 30S subunit, it contacts several helices of the 16S rRNA. In the 70S ribosome it contacts the 23S rRNA (bridge B1a) and protein L5 of the 50S subunit (bridge B1b), connecting the 2 subunits; these bridges are implicated in subunit movement. Contacts the tRNAs in the A and P-sites. In Gluconacetobacter diazotrophicus (strain ATCC 49037 / DSM 5601 / CCUG 37298 / CIP 103539 / LMG 7603 / PAl5), this protein is Small ribosomal subunit protein uS13.